A 794-amino-acid polypeptide reads, in one-letter code: Histone-lysine N-methyltransferase, H3 lysine-9 specific SUVH5 (794 aa).

Disordered regions lie at residues 187–210 (VGRD…KRSI) and 254–276 (SPVK…KNSE). Over residues 194–203 (NMGSKFSKNG) the composition is skewed to polar residues. A compositionally biased stretch (basic and acidic residues) spans 258-276 (PSEKRNGDYGEGSMRKNSE). The YDG domain occupies 365–515 (GTVPGVEVGD…KLVFKFKLRR (151 aa)). Positions 585–644 (KSCGCTNGCSKSKNCACIVKNGGKIPYYDGAIVEIKPLVYECGPHCKCPPSCNMRVSQHG) constitute a Pre-SET domain. An SET domain is found at 647–764 (IKLEIFKTES…PLQELSYDYN (118 aa)). The Post-SET domain occupies 778–794 (KKKFCYCGSAECSGRLY).

This sequence belongs to the class V-like SAM-binding methyltransferase superfamily. Histone-lysine methyltransferase family. Suvar3-9 subfamily. As to expression, expressed in leaves stems and flowers.

Its subcellular location is the nucleus. It localises to the chromosome. The protein resides in the centromere. It carries out the reaction N(6)-methyl-L-lysyl(9)-[histone H3] + S-adenosyl-L-methionine = N(6),N(6)-dimethyl-L-lysyl(9)-[histone H3] + S-adenosyl-L-homocysteine + H(+). It catalyses the reaction L-lysyl(9)-[histone H3] + S-adenosyl-L-methionine = N(6)-methyl-L-lysyl(9)-[histone H3] + S-adenosyl-L-homocysteine + H(+). Its function is as follows. Histone methyltransferase. Methylates 'Lys-9' of histone H3. H3 'Lys-9' methylation represents a specific tag for epigenetic transcriptional repression. The chain is Histone-lysine N-methyltransferase, H3 lysine-9 specific SUVH5 (SUVH5) from Arabidopsis thaliana (Mouse-ear cress).